The following is a 143-amino-acid chain: Peptide methionine sulfoxide reductase MsrB (143 aa).

In terms of domain architecture, MsrB spans 5 to 127; that stretch reads NEELKKKLTP…NSAALRFIPK (123 aa). Catalysis depends on C116, which acts as the Nucleophile.

This sequence belongs to the MsrB Met sulfoxide reductase family.

The catalysed reaction is L-methionyl-[protein] + [thioredoxin]-disulfide + H2O = L-methionyl-(R)-S-oxide-[protein] + [thioredoxin]-dithiol. The sequence is that of Peptide methionine sulfoxide reductase MsrB from Halalkalibacterium halodurans (strain ATCC BAA-125 / DSM 18197 / FERM 7344 / JCM 9153 / C-125) (Bacillus halodurans).